The chain runs to 109 residues: Movement protein (109 aa).

Residues 1–28 (MDSFGRAPPLWPQSALPRVPGAAPSSSG) form a disordered region. The helical transmembrane segment at 34 to 54 (VGEIAIFTFVAVLALYLLWSW) threads the bilayer.

This sequence belongs to the mastrevirus movement protein family. As to quaternary structure, interacts with the capsid protein (CP). Part of a MP-CP-viral DNA complex.

It is found in the host membrane. In terms of biological role, involved in the viral transport within, and between cells. In Sugarcane streak virus (isolate South Africa) (SSV), this protein is Movement protein.